Here is a 274-residue protein sequence, read N- to C-terminus: Large ribosomal subunit protein uL2cz/uL2cy (274 aa).

Disordered stretches follow at residues 1-21 (MAIH…VDSQ) and 225-274 (PVDH…RRSK).

It belongs to the universal ribosomal protein uL2 family. As to quaternary structure, part of the 50S ribosomal subunit.

It is found in the plastid. The protein localises to the chloroplast. The polypeptide is Large ribosomal subunit protein uL2cz/uL2cy (rpl2-A) (Arabidopsis thaliana (Mouse-ear cress)).